Consider the following 441-residue polypeptide: Glutamate--tRNA ligase 2 (441 aa).

The short motif at 9-19 is the 'HIGH' region element; it reads PSPTGYIHVGN. A 'KMSKS' region motif is present at residues 239 to 243; that stretch reads ALSKR. Position 242 (lysine 242) interacts with ATP.

Belongs to the class-I aminoacyl-tRNA synthetase family. Glutamate--tRNA ligase type 1 subfamily. As to quaternary structure, monomer.

The protein localises to the cytoplasm. It carries out the reaction tRNA(Glu) + L-glutamate + ATP = L-glutamyl-tRNA(Glu) + AMP + diphosphate. Its function is as follows. Catalyzes the attachment of glutamate to tRNA(Glu) in a two-step reaction: glutamate is first activated by ATP to form Glu-AMP and then transferred to the acceptor end of tRNA(Glu). The chain is Glutamate--tRNA ligase 2 from Cereibacter sphaeroides (strain ATCC 17023 / DSM 158 / JCM 6121 / CCUG 31486 / LMG 2827 / NBRC 12203 / NCIMB 8253 / ATH 2.4.1.) (Rhodobacter sphaeroides).